The following is a 251-amino-acid chain: Flap endonuclease Xni (251 aa).

Asp-104 serves as a coordination point for Mg(2+). One can recognise a 5'-3' exonuclease domain in the interval 160–249 (VLPRQLPDYW…IDGNLQQLRL (90 aa)). K(+) contacts are provided by Leu-171, Ala-172, Pro-180, Val-182, and Ile-185. The segment at 184-189 (GIGPKS) is interaction with DNA.

It belongs to the Xni family. The cofactor is Mg(2+). Requires K(+) as cofactor.

Has flap endonuclease activity. During DNA replication, flap endonucleases cleave the 5'-overhanging flap structure that is generated by displacement synthesis when DNA polymerase encounters the 5'-end of a downstream Okazaki fragment. The protein is Flap endonuclease Xni of Salmonella paratyphi A (strain ATCC 9150 / SARB42).